The chain runs to 510 residues: Serine/threonine protein phosphatase 2A 59 kDa regulatory subunit B' eta isoform (510 aa).

The segment at 1–87 is disordered; the sequence is MWKQILSKLP…NNNNNNNNGV (87 aa). The span at 10–19 shows a compositional bias: basic residues; it reads PNKKSSKHEH. The span at 27-42 shows a compositional bias: low complexity; the sequence is HSSSSSHTSGASTSKS.

This sequence belongs to the phosphatase 2A regulatory subunit B56 family. In terms of assembly, PP2A consists of a common heteromeric enzyme, composed of a catalytic subunit (subunits C), a constant regulatory subunit (subunit A), and a variety of regulatory subunits such as subunits B (the R2/B/PR55/B55, R3/B''/PR72/PR130/PR59 and R5/B'/B56 families). Interacts with BZR1. Interacts with BRI1.

The protein localises to the nucleus. The protein resides in the nucleolus. It is found in the cytoplasm. The B regulatory subunit may modulate substrate selectivity and catalytic activity, and may also direct the localization of the catalytic enzyme to a particular subcellular compartment. The holoenzyme composed of PP2AA1, PP2A4 and B'ETA acts as negative regulator of plant innate immunity by controlling BAK1 phosphorylation state and activation in surface-localized immune receptor complexes. Required for the formation of the PP2A holoenzyme that negatively regulates brassinosteroid signaling by dephosphorylating and inactivating BRI1 in the cytoplasm. This is Serine/threonine protein phosphatase 2A 59 kDa regulatory subunit B' eta isoform (B'ETA) from Arabidopsis thaliana (Mouse-ear cress).